The following is a 304-amino-acid chain: Ribokinase (304 aa).

Substrate-binding positions include 12–14 (NVD), 41–45 (GKGAN), and E142. ATP contacts are provided by residues N186 and 222–227 (TLGKQG). 2 residues coordinate K(+): D248 and T250. ATP is bound by residues 253-254 (GD) and N279. Residue D254 participates in substrate binding. Residue D254 is the Proton acceptor of the active site. K(+) is bound by residues T285, K288, G290, and S294.

This sequence belongs to the carbohydrate kinase PfkB family. Ribokinase subfamily. Homodimer. The cofactor is Mg(2+).

Its subcellular location is the cytoplasm. The enzyme catalyses D-ribose + ATP = D-ribose 5-phosphate + ADP + H(+). The protein operates within carbohydrate metabolism; D-ribose degradation; D-ribose 5-phosphate from beta-D-ribopyranose: step 2/2. Its activity is regulated as follows. Activated by a monovalent cation that binds near, but not in, the active site. The most likely occupant of the site in vivo is potassium. Ion binding induces a conformational change that may alter substrate affinity. Its function is as follows. Catalyzes the phosphorylation of ribose at O-5 in a reaction requiring ATP and magnesium. The resulting D-ribose-5-phosphate can then be used either for sythesis of nucleotides, histidine, and tryptophan, or as a component of the pentose phosphate pathway. This chain is Ribokinase, found in Staphylococcus aureus (strain COL).